The primary structure comprises 383 residues: Delta(12) fatty acid desaturase FAD2 (383 aa).

A disordered region spans residues 1-29 (MGAGGRMQDPTNGGNKTEPEPIQRVPHEK). A compositionally biased stretch (basic and acidic residues) spans 17–29 (TEPEPIQRVPHEK). The next 2 helical transmembrane spans lie at 50–70 (VIRSFSYVFYDLTIASILYYI) and 85–105 (VAWPVYWAVQGCVLTGVWVIA). Residues 106 to 110 (HECGH) carry the Histidine box-1 motif. Residues 118–138 (WLDDTVGLVLHSFLLVPYFSW) traverse the membrane as a helical segment. The Histidine box-2 signature appears at 142-146 (HRRHH). A run of 3 helical transmembrane segments spans residues 180 to 200 (ILTLLVTLTLGWPLYLTFNVS), 226 to 246 (IFISDAGILAVVFVLFRLAMT), and 252 to 272 (VLTMYGGPLLVVNGFLVLITF). Positions 316–320 (HVAHH) match the Histidine box-3 motif.

Belongs to the fatty acid desaturase type 1 family. As to expression, expressed in leaves, flower buds and developing seeds.

The protein localises to the membrane. The protein operates within lipid metabolism; polyunsaturated fatty acid biosynthesis. In terms of biological role, catalyzes the desaturation of oleic acid to linoleic acid. Introduces a double bond at position 12 of 16:1(9Z) and 18:1(9Z). The chain is Delta(12) fatty acid desaturase FAD2 from Calendula officinalis (Pot marigold).